A 319-amino-acid polypeptide reads, in one-letter code: Acetyl-coenzyme A carboxylase carboxyl transferase subunit alpha (319 aa).

Positions 39–293 constitute a CoA carboxyltransferase C-terminal domain; the sequence is KLEQKAAQLL…GDAIAEELKG (255 aa).

This sequence belongs to the AccA family. As to quaternary structure, acetyl-CoA carboxylase is a heterohexamer composed of biotin carboxyl carrier protein (AccB), biotin carboxylase (AccC) and two subunits each of ACCase subunit alpha (AccA) and ACCase subunit beta (AccD).

The protein localises to the cytoplasm. It catalyses the reaction N(6)-carboxybiotinyl-L-lysyl-[protein] + acetyl-CoA = N(6)-biotinyl-L-lysyl-[protein] + malonyl-CoA. The protein operates within lipid metabolism; malonyl-CoA biosynthesis; malonyl-CoA from acetyl-CoA: step 1/1. Functionally, component of the acetyl coenzyme A carboxylase (ACC) complex. First, biotin carboxylase catalyzes the carboxylation of biotin on its carrier protein (BCCP) and then the CO(2) group is transferred by the carboxyltransferase to acetyl-CoA to form malonyl-CoA. The chain is Acetyl-coenzyme A carboxylase carboxyl transferase subunit alpha from Parvibaculum lavamentivorans (strain DS-1 / DSM 13023 / NCIMB 13966).